A 324-amino-acid polypeptide reads, in one-letter code: Fibronectin type III domain-containing protein 8 (324 aa).

The Fibronectin type-III domain occupies 179-280 (PDTPFIFEHT…KPYKFATLAT (102 aa)).

The chain is Fibronectin type III domain-containing protein 8 (FNDC8) from Homo sapiens (Human).